Here is a 268-residue protein sequence, read N- to C-terminus: UPF0328 protein ECU10_1850 (268 aa).

The protein belongs to the UPF0328 family.

In Encephalitozoon cuniculi (strain GB-M1) (Microsporidian parasite), this protein is UPF0328 protein ECU10_1850.